The primary structure comprises 164 residues: Phosphopantetheine adenylyltransferase (164 aa).

Threonine 14 contacts substrate. Residues 14–15 and histidine 22 contribute to the ATP site; that span reads TF. Lysine 46, methionine 78, and arginine 92 together coordinate substrate. Residues 93-95, glutamate 103, and 128-134 each bind ATP; these read GLR and HAFISST.

This sequence belongs to the bacterial CoaD family. In terms of assembly, homohexamer. The cofactor is Mg(2+).

It is found in the cytoplasm. It carries out the reaction (R)-4'-phosphopantetheine + ATP + H(+) = 3'-dephospho-CoA + diphosphate. It functions in the pathway cofactor biosynthesis; coenzyme A biosynthesis; CoA from (R)-pantothenate: step 4/5. In terms of biological role, reversibly transfers an adenylyl group from ATP to 4'-phosphopantetheine, yielding dephospho-CoA (dPCoA) and pyrophosphate. This chain is Phosphopantetheine adenylyltransferase, found in Vibrio vulnificus (strain CMCP6).